A 492-amino-acid polypeptide reads, in one-letter code: NAD(P)H-quinone oxidoreductase subunit 2 A, chloroplastic (492 aa).

Transmembrane regions (helical) follow at residues 6-26 (LLLF…GLIL), 39-59 (ISWF…ALLF), 81-101 (IFQF…VEYI), 106-126 (MAIT…MFLC), 131-151 (LITI…LSGY), 165-185 (YLLM…WLYG), 209-229 (PGIL…LSPA), 277-297 (WHLL…LIAI), 305-325 (MLAY…IVGD), 336-356 (YMLF…SFGL), 377-397 (ALSL…AGFF), 400-420 (LHLF…IGLL), and 464-484 (FSMI…NPII).

The protein belongs to the complex I subunit 2 family. NDH is composed of at least 16 different subunits, 5 of which are encoded in the nucleus.

It is found in the plastid. The protein localises to the chloroplast thylakoid membrane. It catalyses the reaction a plastoquinone + NADH + (n+1) H(+)(in) = a plastoquinol + NAD(+) + n H(+)(out). The catalysed reaction is a plastoquinone + NADPH + (n+1) H(+)(in) = a plastoquinol + NADP(+) + n H(+)(out). NDH shuttles electrons from NAD(P)H:plastoquinone, via FMN and iron-sulfur (Fe-S) centers, to quinones in the photosynthetic chain and possibly in a chloroplast respiratory chain. The immediate electron acceptor for the enzyme in this species is believed to be plastoquinone. Couples the redox reaction to proton translocation, and thus conserves the redox energy in a proton gradient. This chain is NAD(P)H-quinone oxidoreductase subunit 2 A, chloroplastic, found in Phaseolus vulgaris (Kidney bean).